The chain runs to 158 residues: Encapsulin nanocompartment cargo protein EncB (158 aa).

Fe cation is bound by residues Glu22, Glu52, and His55. 2 short sequence motifs (di-iron-binding motif) span residues Glu52 to His55 and Glu58 to His61. The disordered stretch occupies residues Ala92–Arg158. The tract at residues Leu142–Arg149 is probable targeting peptide. A compositionally biased stretch (gly residues) spans Arg148–Arg158.

It belongs to the ferritin-like superfamily.

The protein localises to the encapsulin nanocompartment. Functionally, cargo protein of a type 1 encapsulin nanocompartment. May help nucleate Fe atoms in the interior of the encapsulin nanocompartment. Present in about 36 copies/encapsulin nanocompartment. This chain is Encapsulin nanocompartment cargo protein EncB, found in Myxococcus xanthus (strain DK1622).